The following is a 105-amino-acid chain: MNPGETVLPPQLREEIALLAVYLLSSGRGLLEEPADYGIYRCTDGARRALQLLDEHGGSTARLTAVRERLDEVMFAPMGEDRDMGAILDDLCRQMADALPEIETP.

Functionally, involved in the biosynthesis of albonoursin (cyclo[(alpha,beta-dehydro-Phe)-(alpha,beta-dehydro-Leu)]), an antibacterial peptide. AlbB is essential for cyclic dipeptide oxidase AlbA (CDO) activity. This is Protein AlbB (albB) from Streptomyces noursei (Streptomyces albulus).